Here is a 225-residue protein sequence, read N- to C-terminus: Cytochrome c oxidase subunit 2 (225 aa).

At 1-26 the chain is on the mitochondrial intermembrane side; sequence MMTWSQMSFSDMNSPIMEQMVFFHDH. Residues 27–48 traverse the membrane as a helical segment; that stretch reads SMMIILMITILTIYMITNIMMN. The Mitochondrial matrix segment spans residues 49–62; sequence NLLSRSMMEGQEIE. The chain crosses the membrane as a helical span at residues 63 to 82; the sequence is IIWTIIPAITLIFIAIPSLH. The Mitochondrial intermembrane portion of the chain corresponds to 83–225; that stretch reads LLYLTDETFN…KNFINFINSS (143 aa). 6 residues coordinate Cu cation: His160, Cys195, Glu197, Cys199, His203, and Met206. Glu197 contributes to the Mg(2+) binding site.

It belongs to the cytochrome c oxidase subunit 2 family. Component of the cytochrome c oxidase (complex IV, CIV), a multisubunit enzyme composed of a catalytic core of 3 subunits and several supernumerary subunits. The complex exists as a monomer or a dimer and forms supercomplexes (SCs) in the inner mitochondrial membrane with ubiquinol-cytochrome c oxidoreductase (cytochrome b-c1 complex, complex III, CIII). Requires Cu cation as cofactor.

It is found in the mitochondrion inner membrane. The catalysed reaction is 4 Fe(II)-[cytochrome c] + O2 + 8 H(+)(in) = 4 Fe(III)-[cytochrome c] + 2 H2O + 4 H(+)(out). In terms of biological role, component of the cytochrome c oxidase, the last enzyme in the mitochondrial electron transport chain which drives oxidative phosphorylation. The respiratory chain contains 3 multisubunit complexes succinate dehydrogenase (complex II, CII), ubiquinol-cytochrome c oxidoreductase (cytochrome b-c1 complex, complex III, CIII) and cytochrome c oxidase (complex IV, CIV), that cooperate to transfer electrons derived from NADH and succinate to molecular oxygen, creating an electrochemical gradient over the inner membrane that drives transmembrane transport and the ATP synthase. Cytochrome c oxidase is the component of the respiratory chain that catalyzes the reduction of oxygen to water. Electrons originating from reduced cytochrome c in the intermembrane space (IMS) are transferred via the dinuclear copper A center (CU(A)) of subunit 2 and heme A of subunit 1 to the active site in subunit 1, a binuclear center (BNC) formed by heme A3 and copper B (CU(B)). The BNC reduces molecular oxygen to 2 water molecules using 4 electrons from cytochrome c in the IMS and 4 protons from the mitochondrial matrix. This chain is Cytochrome c oxidase subunit 2 (COII), found in Rhipicephalus sanguineus (Brown dog tick).